The chain runs to 250 residues: tRNA (guanine-N(1)-)-methyltransferase (250 aa).

S-adenosyl-L-methionine-binding positions include glycine 113 and 133-138; that span reads IGDYVL.

The protein belongs to the RNA methyltransferase TrmD family. In terms of assembly, homodimer.

The protein resides in the cytoplasm. It catalyses the reaction guanosine(37) in tRNA + S-adenosyl-L-methionine = N(1)-methylguanosine(37) in tRNA + S-adenosyl-L-homocysteine + H(+). Its function is as follows. Specifically methylates guanosine-37 in various tRNAs. This is tRNA (guanine-N(1)-)-methyltransferase from Shewanella amazonensis (strain ATCC BAA-1098 / SB2B).